The sequence spans 241 residues: DNA repair protein RecO (241 aa).

This sequence belongs to the RecO family.

Its function is as follows. Involved in DNA repair and RecF pathway recombination. In Ruegeria sp. (strain TM1040) (Silicibacter sp.), this protein is DNA repair protein RecO.